The primary structure comprises 399 residues: DNA replication and repair protein RecF (399 aa).

30–37 (GSNGIGKT) serves as a coordination point for ATP.

Belongs to the RecF family.

The protein localises to the cytoplasm. The RecF protein is involved in DNA metabolism; it is required for DNA replication and normal SOS inducibility. RecF binds preferentially to single-stranded, linear DNA. It also seems to bind ATP. The protein is DNA replication and repair protein RecF of Paenarthrobacter aurescens (strain TC1).